The sequence spans 269 residues: Probable ribosomal RNA small subunit methyltransferase A (269 aa).

S-adenosyl-L-methionine contacts are provided by histidine 19, leucine 21, glycine 46, glutamate 67, aspartate 92, and asparagine 107.

This sequence belongs to the class I-like SAM-binding methyltransferase superfamily. rRNA adenine N(6)-methyltransferase family. RsmA subfamily.

It is found in the cytoplasm. Functionally, specifically dimethylates two adjacent adenosines in the loop of a conserved hairpin near the 3'-end of 16S rRNA in the 30S particle. May play a critical role in biogenesis of 30S subunits. The protein is Probable ribosomal RNA small subunit methyltransferase A of Methanosarcina acetivorans (strain ATCC 35395 / DSM 2834 / JCM 12185 / C2A).